The chain runs to 475 residues: Exodeoxyribonuclease 7 large subunit (475 aa).

Residues 452–475 are disordered; it reads DHGLNRSSKSKRIKSKQDDQGTLF. A compositionally biased stretch (basic and acidic residues) spans 466-475; it reads SKQDDQGTLF.

Belongs to the XseA family. As to quaternary structure, heterooligomer composed of large and small subunits.

The protein localises to the cytoplasm. It catalyses the reaction Exonucleolytic cleavage in either 5'- to 3'- or 3'- to 5'-direction to yield nucleoside 5'-phosphates.. Its function is as follows. Bidirectionally degrades single-stranded DNA into large acid-insoluble oligonucleotides, which are then degraded further into small acid-soluble oligonucleotides. The protein is Exodeoxyribonuclease 7 large subunit of Bartonella quintana (strain Toulouse) (Rochalimaea quintana).